The chain runs to 214 residues: MDSIGENILEKGLLLLGVELDQSQVKVLLAYLRLLEKWNQHYNLTAIKNSKEMISKHVLDSLSIESYLEGRRILDVGSGAGLPGIPLAIARPGCEFVLLDSNAKKTRFLFQASVELGLPNISVVSERVEVYRPSHLFDTIIARAFAKLVDFVAQAEHLCKPRGCLLAMKGRFPQDELEALPASFEIVKACSLSVPEINAQRHLVKLRPRRAGDH.

Residues glycine 77, leucine 82, 128–129, and arginine 143 each bind S-adenosyl-L-methionine; that span reads VE.

This sequence belongs to the methyltransferase superfamily. RNA methyltransferase RsmG family.

It is found in the cytoplasm. It catalyses the reaction guanosine(527) in 16S rRNA + S-adenosyl-L-methionine = N(7)-methylguanosine(527) in 16S rRNA + S-adenosyl-L-homocysteine. In terms of biological role, specifically methylates the N7 position of guanine in position 527 of 16S rRNA. This is Ribosomal RNA small subunit methyltransferase G from Nitrosococcus oceani (strain ATCC 19707 / BCRC 17464 / JCM 30415 / NCIMB 11848 / C-107).